The sequence spans 216 residues: Alanyl-tRNA editing protein AlaX-M (216 aa).

The Zn(2+) site is built by His99, His103, and Cys182.

The protein belongs to the class-II aminoacyl-tRNA synthetase family. Editing domain AlaX-M subfamily. As to quaternary structure, monomer. Zn(2+) serves as cofactor.

Its subcellular location is the cytoplasm. In terms of biological role, functions in trans to edit the amino acid moiety from mischarged charged Gly-tRNA(Ala) and Ser-tRNA(Ala). This is Alanyl-tRNA editing protein AlaX-M (alaXM) from Pyrococcus horikoshii (strain ATCC 700860 / DSM 12428 / JCM 9974 / NBRC 100139 / OT-3).